The chain runs to 421 residues: D-amino acid dehydrogenase (421 aa).

FAD is bound at residue 4–18 (VLVLGSGVVGLTSAW).

The protein belongs to the DadA oxidoreductase family. Requires FAD as cofactor.

The catalysed reaction is a D-alpha-amino acid + A + H2O = a 2-oxocarboxylate + AH2 + NH4(+). Functionally, oxidative deamination of D-amino acids. The polypeptide is D-amino acid dehydrogenase (Vibrio cholerae serotype O1 (strain ATCC 39315 / El Tor Inaba N16961)).